The sequence spans 465 residues: Interferon-inducible GTPase 5 (465 aa).

The region spanning 53 to 235 (TRLEVGVTGE…PLLMSTWERD (183 aa)) is the IRG-type G domain. Residues 62–69 (ESGAGKSS), 87–91 (TGVVE), 169–171 (KVD), and 216–218 (SNL) each bind GTP. Serine 247 and serine 304 each carry phosphoserine. Positions 405–438 (EEEEDTQPDVSLEAAGDNGVEKRGSGEGSMEEAP) are disordered.

Belongs to the TRAFAC class dynamin-like GTPase superfamily. IRG family.

The protein resides in the cell projection. The protein localises to the cilium. It localises to the flagellum. Its subcellular location is the lipid droplet. It catalyses the reaction GTP + H2O = GDP + phosphate + H(+). In terms of biological role, required for sperm motility and therefore male fertility, via positive regulation of spermatozoa fibrous sheath formation. The chain is Interferon-inducible GTPase 5 (IRGC) from Bos taurus (Bovine).